A 522-amino-acid chain; its full sequence is 2-isopropylmalate synthase (522 aa).

The 263-residue stretch at 5–267 (VIIFDTTLRD…ETGINAKEIH (263 aa)) folds into the Pyruvate carboxyltransferase domain. Mn(2+) is bound by residues Asp14, His202, His204, and Asn238. The tract at residues 392–522 (QLQQLVVQSD…MQKNRELGGV (131 aa)) is regulatory domain.

Belongs to the alpha-IPM synthase/homocitrate synthase family. LeuA type 1 subfamily. Homodimer. Mn(2+) is required as a cofactor.

The protein resides in the cytoplasm. It carries out the reaction 3-methyl-2-oxobutanoate + acetyl-CoA + H2O = (2S)-2-isopropylmalate + CoA + H(+). Its pathway is amino-acid biosynthesis; L-leucine biosynthesis; L-leucine from 3-methyl-2-oxobutanoate: step 1/4. Functionally, catalyzes the condensation of the acetyl group of acetyl-CoA with 3-methyl-2-oxobutanoate (2-ketoisovalerate) to form 3-carboxy-3-hydroxy-4-methylpentanoate (2-isopropylmalate). The sequence is that of 2-isopropylmalate synthase from Shewanella baltica (strain OS155 / ATCC BAA-1091).